The following is a 350-amino-acid chain: Renin receptor (350 aa).

A signal peptide spans 1–17 (MAVLVVLLFFLVAGALG). At 18–302 (NEFSILRSPG…YNLAYKYNLE (285 aa)) the chain is on the extracellular side. Residues 303–323 (YSVVFNLVLWIMIGLALAVII) traverse the membrane as a helical segment. Residues 324–350 (TSYNIWNMDPGYDSIIYRMTNQKIRID) are Cytoplasmic-facing. The Mediates retrograde transport to the ER motif lies at 346-350 (KIRID).

As to quaternary structure, interacts with renin. Accessory component of the multisubunit proton-transporting vacuolar (V)-ATPase protein pump. Interacts (via N-terminus) with ATP6AP1 (via N-terminus). Interacts with ATP6V0D1; ATP6V0D1 is a V-ATPase complex subunit and the interaction promotes V-ATPase complex assembly. Interacts with TMEM9; TMEM9 is a V-ATPase assembly regulator and the interaction induces the interaction with ATP6V0D1. Interacts with VMA21 (via N-terminus); VMA21 is a V-ATPase accessory component. In terms of processing, phosphorylated. Proteolytically cleaved by a furin-like convertase in the trans-Golgi network to generate N- and C-terminal fragments. Expressed in glutamatergic and GABAergic neurons with highest levels in the cortex, the hippocampus, the medial habenular nucleus, the cerebellum, the medulla and the olfactory bulb (at protein level).

It localises to the endoplasmic reticulum membrane. It is found in the lysosome membrane. The protein localises to the cytoplasmic vesicle. Its subcellular location is the autophagosome membrane. The protein resides in the cell projection. It localises to the dendritic spine membrane. It is found in the axon. The protein localises to the endosome membrane. Its subcellular location is the clathrin-coated vesicle membrane. The protein resides in the secretory vesicle. It localises to the synaptic vesicle membrane. Functionally, multifunctional protein which functions as a renin, prorenin cellular receptor and is involved in the assembly of the lysosomal proton-transporting V-type ATPase (V-ATPase) and the acidification of the endo-lysosomal system. May mediate renin-dependent cellular responses by activating ERK1 and ERK2. By increasing the catalytic efficiency of renin in AGT/angiotensinogen conversion to angiotensin I, may also play a role in the renin-angiotensin system (RAS). Through its function in V-type ATPase (v-ATPase) assembly and acidification of the lysosome it regulates protein degradation and may control different signaling pathways important for proper brain development, synapse morphology and synaptic transmission. The polypeptide is Renin receptor (Mus musculus (Mouse)).